A 90-amino-acid polypeptide reads, in one-letter code: UPF0729 protein Bm1_03610 (90 aa).

The protein belongs to the UPF0729 family.

This is UPF0729 protein Bm1_03610 from Brugia malayi (Filarial nematode worm).